The primary structure comprises 359 residues: Cytoplasmic tRNA 2-thiolation protein 1 (359 aa).

This sequence belongs to the TtcA family. CTU1/NCS6/ATPBD3 subfamily. Interacts with NCS2 and URM1. May act by forming a heterodimer with NCS2. Component of a large molecular weight complex of more than 250 kDa.

It localises to the cytoplasm. It is found in the mitochondrion. The protein operates within tRNA modification; 5-methoxycarbonylmethyl-2-thiouridine-tRNA biosynthesis. Functionally, plays a central role in 2-thiolation of mcm(5)S(2)U at tRNA wobble positions of tRNA(Lys), tRNA(Glu) and tRNA(Gln). Directly binds tRNAs and probably acts by catalyzing adenylation of tRNAs, an intermediate required for 2-thiolation. It is unclear whether it acts as a sulfurtransferase that transfers sulfur from thiocarboxylated URM1 onto the uridine of tRNAs at wobble position. Prior mcm(5) tRNA modification by the elongator complex is required for 2-thiolation. May also be involved in protein urmylation. May also be involved in protein urmylation and in invasive and pseudohyphal growth. The polypeptide is Cytoplasmic tRNA 2-thiolation protein 1 (Saccharomyces cerevisiae (strain ATCC 204508 / S288c) (Baker's yeast)).